A 254-amino-acid polypeptide reads, in one-letter code: Geranylgeranylglyceryl phosphate synthase (254 aa).

Residues Asp28 and Ser53 each coordinate Mg(2+). Sn-glycerol 1-phosphate is bound by residues Tyr172–Gly178, Gly203–Gly204, and Gly225–Thr226.

This sequence belongs to the GGGP/HepGP synthase family. Group II subfamily. Mg(2+) is required as a cofactor.

The protein localises to the cytoplasm. It catalyses the reaction sn-glycerol 1-phosphate + (2E,6E,10E)-geranylgeranyl diphosphate = sn-3-O-(geranylgeranyl)glycerol 1-phosphate + diphosphate. It functions in the pathway membrane lipid metabolism; glycerophospholipid metabolism. Its function is as follows. Prenyltransferase that catalyzes the transfer of the geranylgeranyl moiety of geranylgeranyl diphosphate (GGPP) to the C3 hydroxyl of sn-glycerol-1-phosphate (G1P). This reaction is the first ether-bond-formation step in the biosynthesis of archaeal membrane lipids. The chain is Geranylgeranylglyceryl phosphate synthase from Methanococcus vannielii (strain ATCC 35089 / DSM 1224 / JCM 13029 / OCM 148 / SB).